The primary structure comprises 527 residues: Probable malate:quinone oxidoreductase (527 aa).

Belongs to the MQO family. Requires FAD as cofactor.

The catalysed reaction is (S)-malate + a quinone = a quinol + oxaloacetate. Its pathway is carbohydrate metabolism; tricarboxylic acid cycle; oxaloacetate from (S)-malate (quinone route): step 1/1. This Pectobacterium carotovorum subsp. carotovorum (strain PC1) protein is Probable malate:quinone oxidoreductase.